Reading from the N-terminus, the 215-residue chain is LysM and putative peptidoglycan-binding domain-containing protein 2 (215 aa).

Residues Met1–Leu40 form a disordered region. The residue at position 2 (Ala2) is an N-acetylalanine. Phosphoserine occurs at positions 5, 24, 33, and 57. Pro residues predominate over residues Ala17–Arg28. Positions Val71 to Ile115 constitute a LysM domain. 2 disordered regions span residues Asp132 to Ser175 and Ala193 to Ser215. The span at Lys196–Glu205 shows a compositional bias: basic and acidic residues.

The sequence is that of LysM and putative peptidoglycan-binding domain-containing protein 2 (LYSMD2) from Homo sapiens (Human).